Consider the following 275-residue polypeptide: Testis-specific gene 13 protein (275 aa).

The span at 1 to 20 (MSQKRQTKFQNGKSKTSENS) shows a compositional bias: polar residues. The segment at 1-28 (MSQKRQTKFQNGKSKTSENSSAKREKGM) is disordered.

Testis-specific.

This chain is Testis-specific gene 13 protein (TSGA13), found in Homo sapiens (Human).